An 83-amino-acid polypeptide reads, in one-letter code: RNA-binding protein Hfq (83 aa).

The Sm domain occupies 9–69 (DQLLNTARKE…ISTIIPAKPI (61 aa)).

The protein belongs to the Hfq family. As to quaternary structure, homohexamer.

In terms of biological role, RNA chaperone that binds small regulatory RNA (sRNAs) and mRNAs to facilitate mRNA translational regulation in response to envelope stress, environmental stress and changes in metabolite concentrations. Also binds with high specificity to tRNAs. This Leptospira biflexa serovar Patoc (strain Patoc 1 / Ames) protein is RNA-binding protein Hfq.